A 207-amino-acid chain; its full sequence is Superoxide dismutase [Mn] (207 aa).

Residues His30, His78, Asp166, and His170 each coordinate Mn(2+).

This sequence belongs to the iron/manganese superoxide dismutase family. Homodimer. It depends on Mn(2+) as a cofactor.

The catalysed reaction is 2 superoxide + 2 H(+) = H2O2 + O2. Destroys superoxide anion radicals which are normally produced within the cells and which are toxic to biological systems. The polypeptide is Superoxide dismutase [Mn] (sodA) (Chlamydia pneumoniae (Chlamydophila pneumoniae)).